The primary structure comprises 109 residues: Sperm-specific class P protein 19 (109 aa).

One can recognise an MSP domain in the interval 1–109; sequence MSLTADPPAC…TVTIPMSATA (109 aa).

Monomer. In terms of tissue distribution, expressed at higher level in testis.

In Caenorhabditis elegans, this protein is Sperm-specific class P protein 19 (ssp-19).